Here is a 210-residue protein sequence, read N- to C-terminus: uncharacterized protein (210 aa).

Helical transmembrane passes span 9 to 29, 35 to 55, 64 to 84, 91 to 111, 149 to 169, and 190 to 210; these read WVVT…IIAK, LIVN…MAWP, GPAV…VVAV, GLYG…AAMN, IWFS…AVFW, and IGQA…LFPV.

The protein localises to the cell membrane. This is an uncharacterized protein from Mycobacterium bovis (strain ATCC BAA-935 / AF2122/97).